Consider the following 605-residue polypeptide: Class II receptor tyrosine kinase (605 aa).

The Ig-like C2-type domain occupies 1–67 (MWSSPGRNLE…DGESASFRVD (67 aa)). Topologically, residues 1 to 84 (MWSSPGRNLE…GSNSGVIAGV (84 aa)) are extracellular. Residues Asn-26, Asn-44, and Asn-72 are each glycosylated (N-linked (GlcNAc...) asparagine). A helical membrane pass occupies residues 85 to 105 (LITLLLLIALIIILICVFWVV). Residues 106–605 (WRYRRRGKFD…GRPRGVAGCV (500 aa)) are Cytoplasmic-facing. A disordered region spans residues 209–230 (EELSPIQEKPTRRNTGLSTYSQ). The segment covering 221 to 230 (RNTGLSTYSQ) has biased composition (polar residues). The 260-residue stretch at 346-605 (IREVKQIGVG…GRPRGVAGCV (260 aa)) folds into the Protein kinase domain. ATP contacts are provided by residues 352–360 (IGVGQFGAV) and Lys-393. Asp-496 acts as the Proton acceptor in catalysis. Position 527 is a phosphotyrosine; by autocatalysis (Tyr-527).

Belongs to the protein kinase superfamily. Tyr protein kinase family. Insulin receptor subfamily. Post-translationally, phosphorylated.

It is found in the cell membrane. The catalysed reaction is L-tyrosyl-[protein] + ATP = O-phospho-L-tyrosyl-[protein] + ADP + H(+). This is Class II receptor tyrosine kinase (TK) from Geodia cydonium (Sponge).